We begin with the raw amino-acid sequence, 208 residues long: Large ribosomal subunit protein eL13 (208 aa).

Belongs to the eukaryotic ribosomal protein eL13 family.

The polypeptide is Large ribosomal subunit protein eL13 (RPL13) (Chlamydomonas sp. (strain W80)).